The chain runs to 397 residues: uncharacterized protein (397 aa).

11 consecutive transmembrane segments (helical) span residues 9–29, 38–58, 85–105, 112–132, 148–168, 182–202, 226–246, 271–291, 310–330, 331–351, and 365–385; these read NAVLGAAFLMATSAIGPGFLT, LLASFGFVILLSILLDIGAQL, FLAALIVMGGLAFNIGNVGGA, IFGIAPEMGAVISGIIAILIF, MGFIMVVLTFYVMFKTEPPVV, PIAIVTLVGGTVGGYITFAGA, AILIASTMRVVLFLAVLGVVS, VLFGVVIWAASVTSVIGAAYT, WIIAFIVISTVVLVTVGKPAA, VLVFVGTLNGLILPIALALIL, and HPVFLAFSGWFVVIIMAILSG.

It belongs to the NRAMP family.

The protein resides in the cell membrane. This is an uncharacterized protein from Haemophilus influenzae (strain ATCC 51907 / DSM 11121 / KW20 / Rd).